We begin with the raw amino-acid sequence, 1826 residues long: ATPase family AAA domain-containing protein 5 (1826 aa).

At serine 44 the chain carries Phosphoserine. Residue lysine 127 forms a Glycyl lysine isopeptide (Lys-Gly) (interchain with G-Cter in SUMO2) linkage. 7 disordered regions span residues 170–254, 282–311, 323–367, 398–572, 588–623, 647–684, and 709–729; these read SIED…KRAD, PAVPACVPSGPGEAVKSGSEGELSGSCEPS, AQVH…RKSN, QQFM…EPGS, RSCSTPATNALGGTESEDAQDTIPVKASTPKSARTS, KFTRISTPKKSKKSSKKSETTEEELTSQKKKANSTSKN, and VVPLRRSSRHQARSAKEKSPE. Residue serine 215 is modified to Phosphoserine. Over residues 243–254 the composition is skewed to basic and acidic residues; it reads NDSRTHATKRAD. A compositionally biased stretch (low complexity) spans 298–311; sequence SGSEGELSGSCEPS. Residues serine 351 and serine 366 each carry the phosphoserine modification. Residues 365–381 are interaction with WDR48; that stretch reads KSNVVIQEGQLELAVLE. The segment covering 418-442 has biased composition (basic and acidic residues); it reads KPLEKQKDPSEKSVHEGDSSSEKII. A compositionally biased stretch (polar residues) spans 445-456; it reads PNIQRVSSQGCL. Basic and acidic residues predominate over residues 459–468; that stretch reads HADRGSFPKE. Residues 469 to 481 show a composition bias toward basic residues; the sequence is KSKKPNKKGKKTR. Positions 487-505 are enriched in basic and acidic residues; it reads NREENIQKEKTAFSLKDEQ. Polar residues predominate over residues 540 to 559; the sequence is DSVQMSLCNRNKSRSSSTPT. 2 positions are modified to phosphoserine: serine 591 and serine 603. Residues serine 727 and serine 801 each carry the phosphoserine modification. Residues 965 to 1034 form a disordered region; that stretch reads GKQASPQLQP…NLDPSRDSGT (70 aa). Residues 1006 to 1019 are compositionally biased toward basic and acidic residues; the sequence is EEMKGRSKDLDERI. Residue serine 1104 is modified to Phosphoserine. 1119–1126 serves as a coordination point for ATP; that stretch reads GPTGVGKT. A disordered region spans residues 1183–1216; the sequence is YNIGKSPKKLNSPGKVVTSPRKLPPSSPKTSGQK. The short motif at 1415 to 1419 is the LXCXE motif element; the sequence is LVCSE. Disordered stretches follow at residues 1527–1552 and 1592–1611; these read PASMGHLTRKQSKDQPLRKSQKRKQK and SNPEIKTQNSGFKPHSVPQP. The interval 1612–1701 is interaction with RAD51 and RFC5; the sequence is PKTLAEKKCC…ATAEALSFTE (90 aa).

It belongs to the AAA ATPase family. Component of a heteropentameric replication factor ATAD5 RFC-like complex composed of one large subunit (ATAD5) and four small subunits (RFC2, RFC3, RFC4 and RFC5). Within the ATAD5 RFC-like complex, interacts with RFC2, RFC4 and RFC5. Within the ATAD5 RFC-like complex, interacts directly via-N terminal with RAD51; the interactions is enhanced under replication stress. Interacts with RB1 predominantly in G1 phase via its LXCXE motif. Interacts with RAD9A in growing cells. The interaction with RAD9A is reduced after exposure to DNA replication-inhibiting agents. Interacts with BRD4. Interacts with PCNA. Interacts with deubiquitinating enzyme USP1, and its associated factor, WDR48. ATR may stimulate the RAD9A dissociation. In terms of tissue distribution, expressed ubiquitously in all cell lines like teratocarcinoma, cell lymphoma, lymphoma.

The protein localises to the nucleus. Functionally, has an important role in DNA replication and in maintaining genome integrity during replication stress. Involved in a RAD9A-related damage checkpoint, a pathway that is important in determining whether DNA damage is compatible with cell survival or whether it requires cell elimination by apoptosis. Modulates the RAD9A interaction with BCL2 and thereby induces DNA damage-induced apoptosis. Promotes PCNA deubiquitination by recruiting the ubiquitin-specific protease 1 (USP1) and WDR48 thereby down-regulating the error-prone damage bypass pathway. As component of the ATAD5 RFC-like complex, regulates the function of the DNA polymerase processivity factor PCNA by unloading the ring-shaped PCNA homotrimer from DNA after replication during the S phase of the cell cycle. This seems to be dependent on its ATPase activity. Plays important roles in restarting stalled replication forks under replication stress, by unloading the PCNA homotrimer from DNA and recruiting RAD51 possibly through an ATR-dependent manner. Ultimately this enables replication fork regression, breakage, and eventual fork restart. Both the PCNA unloading activity and the interaction with WDR48 are required to efficiently recruit RAD51 to stalled replication forks. Promotes the generation of MUS81-mediated single-stranded DNA-associated breaks in response to replication stress, which is an alternative pathway to restart stalled/regressed replication forks. The chain is ATPase family AAA domain-containing protein 5 (Atad5) from Mus musculus (Mouse).